The sequence spans 637 residues: Early transcription factor 70 kDa subunit (637 aa).

It belongs to the helicase family. VETF subfamily. As to quaternary structure, heterodimer of a 70 kDa and a 82 kDa subunit. Part of the early transcription complex composed of ETF, RAP94/OPG109, and the DNA-directed RNA polymerase. In terms of processing, apparently non-glycosylated.

It localises to the virion. Acts with RNA polymerase to initiate transcription from early gene promoters. Is recruited by the RPO-associated protein of 94 kDa RAP94/OPG109 to form the early transcription complex, which also contains the core RNA polymerase. ETF heterodimer binds to early gene promoters. In Monkeypox virus, this protein is Early transcription factor 70 kDa subunit (OPG118).